The sequence spans 198 residues: MSSPEIETLTQALAKLPGLGPRSARRAVLHLLKKREAALGPLLRALEAVNDKLTSCHVCGNVDTGDPCGICADPRRDARMLCVVEEVADLWALDRSRLFPGRFHVLGGRLSALEGIRPEDLSIDLLIGRIAAGGIDEVVLAMNATLEGQTTAHYIADRLESFPVRLTQLAHGLPVGGELDYLDEGTLAQALRARRPVS.

Residues 56 to 71 (CHVCGNVDTGDPCGIC) form a C4-type zinc finger. The Toprim domain maps to 79–174 (RMLCVVEEVA…RLTQLAHGLP (96 aa)).

It belongs to the RecR family.

Functionally, may play a role in DNA repair. It seems to be involved in an RecBC-independent recombinational process of DNA repair. It may act with RecF and RecO. This chain is Recombination protein RecR, found in Rhizorhabdus wittichii (strain DSM 6014 / CCUG 31198 / JCM 15750 / NBRC 105917 / EY 4224 / RW1) (Sphingomonas wittichii).